The chain runs to 357 residues: Ketoreductase CTB6 (357 aa).

NADP(+) is bound at residue Tyr-172.

Belongs to the NAD(P)-dependent epimerase/dehydratase family. Dihydroflavonol-4-reductase subfamily.

The protein operates within mycotoxin biosynthesis. In terms of biological role, ketoreductase; part of the gene cluster that mediates the biosynthesis of cercosporin, a light-activated, non-host-selective toxin. The perylenequinone chromophore of cercosporin absorbs light energy to attain an electronically-activated triplet state and produces active oxygen species such as the hydroxyl radical, superoxide, hydrogen peroxide or singlet oxygen upon reaction with oxygen molecules. These reactive oxygen species cause damage to various cellular components including lipids, proteins and nucleic acids. The first step of cercosporin biosynthesis is performed by the polyketide synthase CTB1 which catalyzes the formation of nor-toralactone. The starter unit acyltransferase (SAT) domain of CTB1 initiates polyketide extension by the selective utilization of acetyl-CoA, which is elongated to the heptaketide in the beta-ketoacyl synthase (KS) domain by successive condensations with six malonyl units introduced by the malonyl acyltransferase (MAT) domain. The product template (PT) domain catalyzes C4-C9 and C2-C11 aldol cyclizations and dehydrations to a trihydroxynaphthalene, which is thought to be delivered to the thioesterase (TE) domain for product release. The bifunctional enzyme CTB3 then methylates nor-toralactone to toralactone before conducting an unusual oxidative aromatic ring opening. The O-methyltransferase CTB2 further methylates the nascent OH-6 of the CBT3 product, blocking further oxidation at this site before the reductase CTB6 reduces the 2-oxopropyl ketone at position C7, giving naphthalene. The FAD-dependent monooxygenase CTB5 in concert with the multicopper oxidase CTB12 are responsible for homodimerization of naphthalene with CTB7 installing the dioxepine moiety, finally producing cercosporin. The fasciclin domain-containing protein CTB11 might act with CTB5 and CTB12 whereas the roles of CTB9 and CTB10 have still to be elucidated. The polypeptide is Ketoreductase CTB6 (Cercospora beticola (Sugarbeet leaf spot fungus)).